A 448-amino-acid polypeptide reads, in one-letter code: Asparagine--tRNA ligase (448 aa).

The protein belongs to the class-II aminoacyl-tRNA synthetase family. In terms of assembly, homodimer.

It localises to the cytoplasm. It catalyses the reaction tRNA(Asn) + L-asparagine + ATP = L-asparaginyl-tRNA(Asn) + AMP + diphosphate + H(+). This Streptococcus mutans serotype c (strain ATCC 700610 / UA159) protein is Asparagine--tRNA ligase.